The following is a 445-amino-acid chain: Argininosuccinate synthase (445 aa).

ATP contacts are provided by residues 18 to 26 and A44; that span reads AFSGGLDTS. L-citrulline is bound at residue Y100. ATP is bound by residues G130 and T132. T132, N136, and D137 together coordinate L-aspartate. L-citrulline is bound at residue N136. ATP is bound at residue D137. Residues R140 and S193 each contribute to the L-citrulline site. Position 195 (D195) interacts with ATP. L-citrulline is bound by residues T202, E204, and E281.

This sequence belongs to the argininosuccinate synthase family. Type 2 subfamily. Homotetramer.

The protein localises to the cytoplasm. It carries out the reaction L-citrulline + L-aspartate + ATP = 2-(N(omega)-L-arginino)succinate + AMP + diphosphate + H(+). The protein operates within amino-acid biosynthesis; L-arginine biosynthesis; L-arginine from L-ornithine and carbamoyl phosphate: step 2/3. The chain is Argininosuccinate synthase (argG) from Pasteurella multocida (strain Pm70).